The primary structure comprises 416 residues: Glutamyl-tRNA reductase (416 aa).

Substrate contacts are provided by residues 49-52, S105, 110-112, and Q116; these read TCNR and EPQ. The Nucleophile role is filled by C50. 185 to 190 is an NADP(+) binding site; that stretch reads GAGETI.

Belongs to the glutamyl-tRNA reductase family. In terms of assembly, homodimer.

The catalysed reaction is (S)-4-amino-5-oxopentanoate + tRNA(Glu) + NADP(+) = L-glutamyl-tRNA(Glu) + NADPH + H(+). The protein operates within porphyrin-containing compound metabolism; protoporphyrin-IX biosynthesis; 5-aminolevulinate from L-glutamyl-tRNA(Glu): step 1/2. Catalyzes the NADPH-dependent reduction of glutamyl-tRNA(Glu) to glutamate 1-semialdehyde (GSA). The protein is Glutamyl-tRNA reductase of Shewanella halifaxensis (strain HAW-EB4).